Here is a 246-residue protein sequence, read N- to C-terminus: 2-aminoethylphosphonate cytidylyltransferase (246 aa).

6 residues coordinate CMP-(2-aminoethyl)phosphonate: Ala19, Gly20, Lys34, Ser97, Glu114, and Ala115. Mg(2+) is bound by residues Asp116 and Asp145. Positions 145, 161, and 202 each coordinate CMP-(2-aminoethyl)phosphonate. Mg(2+)-binding residues include Glu226 and Asp228.

Belongs to the LicC/PntC cytidylyltransferase family. As to quaternary structure, monomer. Mg(2+) serves as cofactor.

It catalyses the reaction (2-aminoethyl)phosphonate + CTP = CMP-(2-aminoethyl)phosphonate + diphosphate. The protein operates within phosphorus metabolism; phosphonate biosynthesis. Its function is as follows. Cytidylyltransferase involved in the biosynthesis of cell-surface phosphonates. Catalyzes the activation of 2-aminoethylphosphonate (AEP) to CMP-2-aminoethylphosphonate (CMP-AEP). Can also use phosphocholine, with much lower efficiency. Exhibits strong activity towards CTP, limited activity towards ATP and no activity with GTP. This chain is 2-aminoethylphosphonate cytidylyltransferase, found in Lancefieldella rimae (strain ATCC 49626 / DSM 7090 / CCUG 31168 / NBRC 15546 / VPI D140H-11A) (Atopobium rimae).